The sequence spans 149 residues: uncharacterized protein (149 aa).

Residues 16–128 enclose the HotDog ACOT-type domain; that stretch reads PAGEPAIRVI…LFTFVAIDED (113 aa).

The protein belongs to the acyl coenzyme A hydrolase family.

This is an uncharacterized protein from Zymomonas mobilis subsp. mobilis (strain ATCC 31821 / ZM4 / CP4).